We begin with the raw amino-acid sequence, 558 residues long: MDTLAGILQVASVVLVLVLVHRPLGDLMARMYESRHDTRVERGIYRLIGVDPRSEQTWPAYLRAVLAFSLVGVLVVYGMQRLQAFLPYALGLPAVPEGISFNTAVSFVTNTNWQSYSPEATMGYTVQLAGLAVQNFVSAAVGIAVAIALVRGFARTRSGTIGNMWVDLIRGSLRLLLPLSLVTAVVLIAGGVIQNFAGFQDVQTLAGGTQTIPGGPVASQEAIKMLGTNGGGFFNANSAHPFEDPTAWTSAFQVLLMLVIPFSLPRTFGKMVGDTRQGTAIAAVMATIAVASLTALTLFELQGAGSAPMAAGAAMEGKEQRVGIIGSALFGTVSTLTSTGAVNSMHDSYTALGGMMPMLNMMLGEVAPGGVGSGLYGMLVLAVIAVFVAGLLVGRTPEYLGKKIGPREIKLASLYILVTPILVLVGTALSFAIPAVRDDVEGTSILNSGLHGLSEVVYAFTSAANNNGSAFAGLTASTPWFTTALGVAMLLGRFVPIVLVLALAGSLAAQDRIPTTSGTLPTHRPQFVGLLIGVTVIVTALTYFPVLALGPLAEGLAS.

11 consecutive transmembrane segments (helical) span residues Met-1–His-21, Trp-58–Gly-78, Phe-85–Val-105, Gly-130–Val-150, Leu-179–Phe-199, Pro-245–Pro-265, Thr-279–Phe-299, Gly-374–Gly-394, Ile-416–Val-436, Ala-484–Ala-504, and Phe-527–Leu-547.

It belongs to the KdpA family. The system is composed of three essential subunits: KdpA, KdpB and KdpC.

It localises to the cell membrane. Part of the high-affinity ATP-driven potassium transport (or Kdp) system, which catalyzes the hydrolysis of ATP coupled with the electrogenic transport of potassium into the cytoplasm. This subunit binds the extracellular potassium ions and delivers the ions to the membrane domain of KdpB through an intramembrane tunnel. This is Potassium-transporting ATPase potassium-binding subunit from Clavibacter sepedonicus (Clavibacter michiganensis subsp. sepedonicus).